The following is a 286-amino-acid chain: MQISDFILVIIGSVALAAGVKYVFTLTSGSNKDKKGGEAEKGKQVEKALDPQEYRKFQLKEKFIVNHNTRIFRFALPNEDDILGLPIGQHISLRAVVGGKEVYRPYTPISSDEERGYFDLLIKVYEKGAMSGYVDNMFIGDSIEVKGPKGKFNYQPNMRKSIGMLAGGTGITPMLQVIKAILKNPSDKTEISLVFGNITEEDILLKKELDELAEKHPQFKVYYVLNNPPKGWTQGVGFVSKEIIESRLPSPSDQTMVIMCGPPMMNKAMTGHLETIGFNESNIFTF.

The helical transmembrane segment at 6–26 (FILVIIGSVALAAGVKYVFTL) threads the bilayer. One can recognise an FAD-binding FR-type domain in the interval 52 to 155 (QEYRKFQLKE…KGPKGKFNYQ (104 aa)). FAD-binding positions include 135 to 150 (DNMF…GPKG) and 161 to 193 (SIGM…EISL).

It belongs to the flavoprotein pyridine nucleotide cytochrome reductase family. As to quaternary structure, monomer. It depends on FAD as a cofactor.

The protein localises to the endoplasmic reticulum membrane. The protein resides in the mitochondrion outer membrane. The enzyme catalyses 2 Fe(III)-[cytochrome b5] + NADH = 2 Fe(II)-[cytochrome b5] + NAD(+) + H(+). In terms of biological role, electron donor reductase for cytochrome b5. The cytochrome b5/NADH cytochrome b5 reductase electron transfer system supports the catalytic activity of several sterol biosynthetic enzymes. The polypeptide is NADH-cytochrome b5 reductase 1 (cyb5r1) (Dictyostelium discoideum (Social amoeba)).